We begin with the raw amino-acid sequence, 294 residues long: Flavin-dependent thymidylate synthase (294 aa).

In terms of domain architecture, ThyX spans 27 to 250 (GFIRVIDYMG…PFTYEAFEEY (224 aa)). FAD contacts are provided by residues threonine 73, 96–98 (RHR), and glutamate 104. DUMP contacts are provided by residues 93-96 (QWIR), 104-108 (EYSAR), and arginine 189. Residues 96-106 (RHRTASVNEYS) carry the ThyX motif motif. Residues 205-207 (NLH) and histidine 211 each bind FAD. DUMP is bound at residue arginine 216. The Involved in ionization of N3 of dUMP, leading to its activation role is filled by arginine 216.

The protein belongs to the thymidylate synthase ThyX family. As to quaternary structure, homotetramer. The cofactor is FAD.

It catalyses the reaction dUMP + (6R)-5,10-methylene-5,6,7,8-tetrahydrofolate + NADPH + H(+) = dTMP + (6S)-5,6,7,8-tetrahydrofolate + NADP(+). It functions in the pathway pyrimidine metabolism; dTTP biosynthesis. Its function is as follows. Catalyzes the reductive methylation of 2'-deoxyuridine-5'-monophosphate (dUMP) to 2'-deoxythymidine-5'-monophosphate (dTMP) while utilizing 5,10-methylenetetrahydrofolate (mTHF) as the methyl donor, and NADPH and FADH(2) as the reductant. The chain is Flavin-dependent thymidylate synthase from Rickettsia typhi (strain ATCC VR-144 / Wilmington).